The chain runs to 599 residues: Elongation factor 4 (599 aa).

Residues 2 to 184 enclose the tr-type G domain; it reads NYKRNFSIIA…RLVRDIPAPK (183 aa). GTP contacts are provided by residues 14-19 and 131-134; these read DHGKST and NKID.

This sequence belongs to the TRAFAC class translation factor GTPase superfamily. Classic translation factor GTPase family. LepA subfamily.

It is found in the cell membrane. The enzyme catalyses GTP + H2O = GDP + phosphate + H(+). Its function is as follows. Required for accurate and efficient protein synthesis under certain stress conditions. May act as a fidelity factor of the translation reaction, by catalyzing a one-codon backward translocation of tRNAs on improperly translocated ribosomes. Back-translocation proceeds from a post-translocation (POST) complex to a pre-translocation (PRE) complex, thus giving elongation factor G a second chance to translocate the tRNAs correctly. Binds to ribosomes in a GTP-dependent manner. The sequence is that of Elongation factor 4 from Hamiltonella defensa subsp. Acyrthosiphon pisum (strain 5AT).